The following is a 495-amino-acid chain: Trimethylamine methyltransferase MttB2 (495 aa).

Pyl-334 is a non-standard amino acid (pyrrolysine).

The protein belongs to the trimethylamine methyltransferase family. Can form a complex with MttC.

The enzyme catalyses Co(I)-[trimethylamine-specific corrinoid protein] + trimethylamine + H(+) = methyl-Co(III)-[trimethylamine-specific corrinoid protein] + dimethylamine. Its pathway is one-carbon metabolism; methanogenesis from trimethylamine. Functionally, catalyzes the transfer of a methyl group from trimethylamine to the corrinoid cofactor of MttC. The chain is Trimethylamine methyltransferase MttB2 (mttB2) from Methanosarcina mazei (strain ATCC BAA-159 / DSM 3647 / Goe1 / Go1 / JCM 11833 / OCM 88) (Methanosarcina frisia).